The sequence spans 552 residues: Probable protein kinase UbiB (552 aa).

Residues 121 to 504 (HFDTVPLASA…QGLQRRVVNA (384 aa)) form the Protein kinase domain. ATP-binding positions include 127–135 (LASASISQV) and Lys149. Catalysis depends on Asp284, which acts as the Proton acceptor. Helical transmembrane passes span 501–521 (VVNAIVGSGLLVAAAVLYGLH) and 526–546 (YLGAIPVWSLISGCVGALALF).

This sequence belongs to the ABC1 family. UbiB subfamily.

The protein resides in the cell inner membrane. The protein operates within cofactor biosynthesis; ubiquinone biosynthesis [regulation]. Is probably a protein kinase regulator of UbiI activity which is involved in aerobic coenzyme Q (ubiquinone) biosynthesis. In Xylella fastidiosa (strain 9a5c), this protein is Probable protein kinase UbiB.